A 28-amino-acid chain; its full sequence is 50 kDa venom protease (28 aa).

This sequence belongs to the venom metalloproteinase (M12B) family. Zn(2+) serves as cofactor. In terms of tissue distribution, expressed by the venom gland.

Its subcellular location is the secreted. This is 50 kDa venom protease from Proatheris superciliaris (Lowland swamp viper).